Here is a 119-residue protein sequence, read N- to C-terminus: MNWVFLCLAILFEVAGTVSMKLSSGFTKLIPSLLLIFFYGGSLFFLTLTLKSIDVSVAYAVWSGMGIVLITVVGFLFFQEHVSVMKVISIGLIIAGVVSLNLIEHVAVSEPVHKSGQYK.

A run of 4 helical transmembrane segments spans residues 3 to 23, 29 to 49, 58 to 78, and 87 to 107; these read WVFLCLAILFEVAGTVSMKLS, LIPSLLLIFFYGGSLFFLTLT, AYAVWSGMGIVLITVVGFLFF, and VISIGLIIAGVVSLNLIEHVA.

This sequence belongs to the drug/metabolite transporter (DMT) superfamily. Small multidrug resistance (SMR) (TC 2.A.7.1) family.

Its subcellular location is the cell membrane. This is an uncharacterized protein from Bacillus subtilis (strain 168).